The following is a 68-amino-acid chain: UPF0435 protein SAB1812c (68 aa).

The protein belongs to the UPF0435 family.

The polypeptide is UPF0435 protein SAB1812c (Staphylococcus aureus (strain bovine RF122 / ET3-1)).